The following is a 621-amino-acid chain: Ubiquitin-like-specific protease 1 (621 aa).

Serine 2 carries the N-acetylserine modification. Serine 21 and serine 25 each carry phosphoserine. 2 disordered regions span residues phenylalanine 116–serine 150 and arginine 169–aspartate 196. Residues serine 124–valine 141 show a composition bias toward low complexity. The residue at position 179 (threonine 179) is a Phosphothreonine. Over residues threonine 179–aspartate 196 the composition is skewed to polar residues. Serine 264 is modified (phosphoserine). A protease region spans residues asparagine 432–lysine 621. Active-site residues include histidine 514, aspartate 531, and cysteine 580.

This sequence belongs to the peptidase C48 family.

The catalysed reaction is Hydrolysis of the alpha-linked peptide bond in the sequence Gly-Gly-|-Ala-Thr-Tyr at the C-terminal end of the small ubiquitin-like modifier (SUMO) propeptide, Smt3, leading to the mature form of the protein. A second reaction involves the cleavage of an epsilon-linked peptide bond between the C-terminal glycine of the mature SUMO and the lysine epsilon-amino group of the target protein.. Its function is as follows. Protease that catalyzes two essential functions in the SUMO pathway: processing of full-length SMT3 to its mature form and deconjugation of SMT3 from targeted proteins. Has an essential role in the G2/M phase of the cell cycle. The sequence is that of Ubiquitin-like-specific protease 1 (ULP1) from Saccharomyces cerevisiae (strain ATCC 204508 / S288c) (Baker's yeast).